A 433-amino-acid polypeptide reads, in one-letter code: Glutamate-1-semialdehyde 2,1-aminomutase (433 aa).

Lysine 267 carries the post-translational modification N6-(pyridoxal phosphate)lysine.

It belongs to the class-III pyridoxal-phosphate-dependent aminotransferase family. HemL subfamily. Homodimer. Pyridoxal 5'-phosphate is required as a cofactor.

It is found in the cytoplasm. It catalyses the reaction (S)-4-amino-5-oxopentanoate = 5-aminolevulinate. It participates in porphyrin-containing compound metabolism; protoporphyrin-IX biosynthesis; 5-aminolevulinate from L-glutamyl-tRNA(Glu): step 2/2. This chain is Glutamate-1-semialdehyde 2,1-aminomutase, found in Syntrophobacter fumaroxidans (strain DSM 10017 / MPOB).